A 707-amino-acid polypeptide reads, in one-letter code: Matrix metalloproteinase-9 (707 aa).

Positions 1-19 (MSPRQPLVLALLVLGCCSA) are cleaved as a signal peptide. Positions 20 to 106 (APRRRQPTLV…PRCGVPDVGK (87 aa)) are cleaved as a propeptide — activation peptide. The N-linked (GlcNAc...) asparagine glycan is linked to Asn88. A Cysteine switch motif is present at residues 97–104 (PRCGVPDV). Residue Cys99 participates in Zn(2+) binding. 2 N-linked (GlcNAc...) asparagine glycosylation sites follow: Asn120 and Asn127. Positions 131 and 165 each coordinate Ca(2+). Residues His175 and Asp177 each contribute to the Zn(2+) site. Asp182, Gly183, Asp185, and Leu187 together coordinate Ca(2+). Residue His190 participates in Zn(2+) binding. 3 residues coordinate Ca(2+): Gly197, Gln199, and Asp201. Zn(2+) is bound at residue His203. Ca(2+) is bound by residues Asp205, Asp206, and Glu208. 3 Fibronectin type-II domains span residues 225 to 273 (ADGA…FCPS), 283 to 331 (ADGK…FCPT), and 342 to 390 (SAGE…FCPD). 6 disulfide bridges follow: Cys230–Cys256, Cys244–Cys271, Cys288–Cys314, Cys302–Cys329, Cys347–Cys373, and Cys361–Cys388. His401 provides a ligand contact to Zn(2+). Residue Glu402 is part of the active site. The Zn(2+) site is built by His405 and His411. A disordered region spans residues 437-508 (RGIQHLYGPN…ASPSAAPTAS (72 aa)). The span at 446–467 (NPNPQPPATTTPEPQPTAPPTA) shows a compositional bias: pro residues. Residues 481 to 493 (PTTSPTGAPSAGP) are compositionally biased toward low complexity. Cys516 and Cys704 form a disulfide bridge. Hemopexin repeat units lie at residues 518 to 563 (VNVF…WPAL), 564 to 608 (PAKL…GLGP), 610 to 657 (VPHV…FPGV), and 658 to 704 (PLNT…ILHC).

It belongs to the peptidase M10A family. In terms of assembly, exists as monomer or homodimer; disulfide-linked. Also exists as heterodimer with LCN2. Macrophages and transformed cell lines produce only the monomeric form. Interacts with ECM1. It depends on Zn(2+) as a cofactor. The cofactor is Ca(2+). N- and O-glycosylated. As to expression, osteoclasts.

The protein resides in the secreted. Its subcellular location is the extracellular space. It localises to the extracellular matrix. The enzyme catalyses Cleavage of gelatin types I and V and collagen types IV and V.. Its function is as follows. Matrix metalloproteinase that plays an essential role in local proteolysis of the extracellular matrix and in leukocyte migration. Could play a role in bone osteoclastic resorption. Cleaves KiSS1 at a Gly-|-Leu bond. Cleaves NINJ1 to generate the Secreted ninjurin-1 form. Cleaves type IV and type V collagen into large C-terminal three quarter fragments and shorter N-terminal one quarter fragments. Degrades fibronectin but not laminin or Pz-peptide. This is Matrix metalloproteinase-9 from Oryctolagus cuniculus (Rabbit).